Reading from the N-terminus, the 252-residue chain is Streptothricin hydrolase (252 aa).

The Nucleophile role is filled by Cys-158. The segment covering 230 to 242 (AVGPAAAPGLPVS) has biased composition (low complexity). The segment at 230–252 (AVGPAAAPGLPVSPAAPPPSPVR) is disordered. A compositionally biased stretch (pro residues) spans 243 to 252 (PAAPPPSPVR).

The protein belongs to the isochorismatase family.

It carries out the reaction streptothricin F + H2O = streptothricin F acid. Catalyzes the hydrolysis of the amide bond of streptolidine lactam, thereby conferring streptothricin (ST) resistance. Can hydrolyze streptothricin-F and streptothricin-D. However, this strain is believed to be a ST nonproducer, which raises the possibility that its true role may not be its involvement in self-resistance to STs. May catalyze the hydrolysis of naturally occurring cyclic amide compounds that are structurally related to STs. This Streptomyces noursei (Streptomyces albulus) protein is Streptothricin hydrolase (sttH).